Reading from the N-terminus, the 305-residue chain is tRNA pseudouridine synthase B (305 aa).

D39 acts as the Nucleophile in catalysis.

It belongs to the pseudouridine synthase TruB family. Type 1 subfamily.

The catalysed reaction is uridine(55) in tRNA = pseudouridine(55) in tRNA. Responsible for synthesis of pseudouridine from uracil-55 in the psi GC loop of transfer RNAs. This Staphylococcus epidermidis (strain ATCC 35984 / DSM 28319 / BCRC 17069 / CCUG 31568 / BM 3577 / RP62A) protein is tRNA pseudouridine synthase B.